Consider the following 57-residue polypeptide: Large ribosomal subunit protein bL32c (57 aa).

In terms of assembly, component of the chloroplast large ribosomal subunit (LSU). Mature 70S chloroplast ribosomes of higher plants consist of a small (30S) and a large (50S) subunit. The 30S small subunit contains 1 molecule of ribosomal RNA (16S rRNA) and 24 different proteins. The 50S large subunit contains 3 rRNA molecules (23S, 5S and 4.5S rRNA) and 33 different proteins.

It localises to the plastid. Its subcellular location is the chloroplast. Component of the chloroplast ribosome (chloro-ribosome), a dedicated translation machinery responsible for the synthesis of chloroplast genome-encoded proteins, including proteins of the transcription and translation machinery and components of the photosynthetic apparatus. This Spinacia oleracea (Spinach) protein is Large ribosomal subunit protein bL32c (rpl32).